Consider the following 258-residue polypeptide: Alcohol dehydrogenase 2 (258 aa).

9-33 is an NAD(+) binding site; that stretch reads IFVGGLGFIGYEACKQLMAKNMASF. Residue Ser-137 participates in substrate binding. Tyr-150 acts as the Proton acceptor in catalysis.

The protein belongs to the short-chain dehydrogenases/reductases (SDR) family. As to quaternary structure, homodimer.

The enzyme catalyses a primary alcohol + NAD(+) = an aldehyde + NADH + H(+). It carries out the reaction a secondary alcohol + NAD(+) = a ketone + NADH + H(+). The polypeptide is Alcohol dehydrogenase 2 (ADH2) (Ceratitis rosa (Natal fruit fly)).